Consider the following 156-residue polypeptide: 6,7-dimethyl-8-ribityllumazine synthase (156 aa).

5-amino-6-(D-ribitylamino)uracil is bound by residues Phe23, Ala57–Glu59, and Ala81–Ile83. A (2S)-2-hydroxy-3-oxobutyl phosphate-binding site is contributed by Ser86–Thr87. His89 acts as the Proton donor in catalysis. Phe114 is a 5-amino-6-(D-ribitylamino)uracil binding site. A (2S)-2-hydroxy-3-oxobutyl phosphate-binding site is contributed by Arg128.

This sequence belongs to the DMRL synthase family.

The enzyme catalyses (2S)-2-hydroxy-3-oxobutyl phosphate + 5-amino-6-(D-ribitylamino)uracil = 6,7-dimethyl-8-(1-D-ribityl)lumazine + phosphate + 2 H2O + H(+). It functions in the pathway cofactor biosynthesis; riboflavin biosynthesis; riboflavin from 2-hydroxy-3-oxobutyl phosphate and 5-amino-6-(D-ribitylamino)uracil: step 1/2. Functionally, catalyzes the formation of 6,7-dimethyl-8-ribityllumazine by condensation of 5-amino-6-(D-ribitylamino)uracil with 3,4-dihydroxy-2-butanone 4-phosphate. This is the penultimate step in the biosynthesis of riboflavin. The polypeptide is 6,7-dimethyl-8-ribityllumazine synthase (Brachyspira hyodysenteriae (strain ATCC 49526 / WA1)).